Consider the following 20-residue polypeptide: Sperm acrosome membrane-associated protein 3, processed form (20 aa).

Belongs to the glycosyl hydrolase 22 family.

Functionally, sperm surface membrane protein that may be involved in sperm-egg plasma membrane adhesion and fusion during fertilization. It could be a potential receptor for the egg oligosaccharide residue N-acetylglucosamine, which is present in the extracellular matrix over the egg plasma membrane. The protein is Sperm acrosome membrane-associated protein 3, processed form (SPACA3) of Vulpes vulpes (Red fox).